Consider the following 196-residue polypeptide: Cell division protein SepF (196 aa).

The segment at 15–80 (VEDDEEFNEP…PKRSASTFSK (66 aa)) is disordered. Polar residues predominate over residues 56 to 79 (RPAQSTPKPQAQTAAPKRSASTFS).

It belongs to the SepF family. Homodimer. Interacts with FtsZ.

It is found in the cytoplasm. Its function is as follows. Cell division protein that is part of the divisome complex and is recruited early to the Z-ring. Probably stimulates Z-ring formation, perhaps through the cross-linking of FtsZ protofilaments. Its function overlaps with FtsA. In Lactococcus lactis subsp. cremoris (strain SK11), this protein is Cell division protein SepF.